Reading from the N-terminus, the 351-residue chain is Chorismate synthase (351 aa).

A disordered region spans residues 39-60 (EDIQRDLERRRPGKRLTSPRGE). NADP(+) contacts are provided by R48 and R53. Residues 124–126 (RSS), A276, 291–295 (KPIPS), and R317 each bind FMN.

Belongs to the chorismate synthase family. In terms of assembly, homotetramer. It depends on FMNH2 as a cofactor.

The enzyme catalyses 5-O-(1-carboxyvinyl)-3-phosphoshikimate = chorismate + phosphate. Its pathway is metabolic intermediate biosynthesis; chorismate biosynthesis; chorismate from D-erythrose 4-phosphate and phosphoenolpyruvate: step 7/7. Functionally, catalyzes the anti-1,4-elimination of the C-3 phosphate and the C-6 proR hydrogen from 5-enolpyruvylshikimate-3-phosphate (EPSP) to yield chorismate, which is the branch point compound that serves as the starting substrate for the three terminal pathways of aromatic amino acid biosynthesis. This reaction introduces a second double bond into the aromatic ring system. This is Chorismate synthase from Syntrophobacter fumaroxidans (strain DSM 10017 / MPOB).